The sequence spans 224 residues: Cytidylate kinase (224 aa).

Position 13–21 (13–21 (GPSASGKGT)) interacts with ATP.

The protein belongs to the cytidylate kinase family. Type 1 subfamily.

The protein localises to the cytoplasm. The enzyme catalyses CMP + ATP = CDP + ADP. It catalyses the reaction dCMP + ATP = dCDP + ADP. The sequence is that of Cytidylate kinase from Nitrosomonas eutropha (strain DSM 101675 / C91 / Nm57).